We begin with the raw amino-acid sequence, 372 residues long: Queuine tRNA-ribosyltransferase (372 aa).

Aspartate 89 serves as the catalytic Proton acceptor. Substrate is bound by residues 89–93 (DSGGF), aspartate 161, and glycine 232. An RNA binding region spans residues 262 to 268 (GIGDLPS). The Nucleophile role is filled by aspartate 281. The RNA binding; important for wobble base 34 recognition stretch occupies residues 286–290 (TKAAR). Cysteine 319, cysteine 321, cysteine 324, and histidine 351 together coordinate Zn(2+).

The protein belongs to the queuine tRNA-ribosyltransferase family. As to quaternary structure, homodimer. Within each dimer, one monomer is responsible for RNA recognition and catalysis, while the other monomer binds to the replacement base PreQ1. Zn(2+) is required as a cofactor.

The enzyme catalyses 7-aminomethyl-7-carbaguanine + guanosine(34) in tRNA = 7-aminomethyl-7-carbaguanosine(34) in tRNA + guanine. The protein operates within tRNA modification; tRNA-queuosine biosynthesis. Its function is as follows. Catalyzes the base-exchange of a guanine (G) residue with the queuine precursor 7-aminomethyl-7-deazaguanine (PreQ1) at position 34 (anticodon wobble position) in tRNAs with GU(N) anticodons (tRNA-Asp, -Asn, -His and -Tyr). Catalysis occurs through a double-displacement mechanism. The nucleophile active site attacks the C1' of nucleotide 34 to detach the guanine base from the RNA, forming a covalent enzyme-RNA intermediate. The proton acceptor active site deprotonates the incoming PreQ1, allowing a nucleophilic attack on the C1' of the ribose to form the product. After dissociation, two additional enzymatic reactions on the tRNA convert PreQ1 to queuine (Q), resulting in the hypermodified nucleoside queuosine (7-(((4,5-cis-dihydroxy-2-cyclopenten-1-yl)amino)methyl)-7-deazaguanosine). The chain is Queuine tRNA-ribosyltransferase from Chlamydia abortus (strain DSM 27085 / S26/3) (Chlamydophila abortus).